Reading from the N-terminus, the 364-residue chain is 2-oxoadipate dioxygenase/decarboxylase, chloroplastic/amyloplastic (364 aa).

Residues 1–49 (MAVALAGARSPGAGAILSLRRLAPAAAAPVRLGGSGTPGTRRRRGIAMA) constitute a chloroplast transit peptide. 2-oxoadipate is bound by residues His-107 and Arg-111. Residue His-107 participates in Fe(2+) binding. Fe(2+) is bound at residue His-243. Positions 289 and 313 each coordinate 2-oxoadipate. Glu-315 provides a ligand contact to Fe(2+).

Belongs to the 2-oxoadipate dioxygenase/decarboxylase family. Fe(2+) is required as a cofactor. In terms of tissue distribution, expressed in roots, stems, leaf sheaths, leaf blades, panicles, and endosperm.

It localises to the plastid. Its subcellular location is the chloroplast. The protein resides in the amyloplast. It carries out the reaction 2-oxoadipate + O2 = (R)-2-hydroxyglutarate + CO2. It functions in the pathway amino-acid degradation. Functionally, catalyzes the decarboxylation and hydroxylation of 2-oxoadipate (2OA) to form D-2-hydroxyglutarate (D-2-HGA). Is involved in a D-lysine catabolic pathway. Involved in the regulation of starch synthesis and amyloplast development within the peripheral endosperm during the grain-filling stage. The sequence is that of 2-oxoadipate dioxygenase/decarboxylase, chloroplastic/amyloplastic from Oryza sativa subsp. japonica (Rice).